Consider the following 385-residue polypeptide: 1-deoxy-D-xylulose 5-phosphate reductoisomerase (385 aa).

Positions 13, 14, 15, 16, 40, and 122 each coordinate NADPH. Residue Lys-123 coordinates 1-deoxy-D-xylulose 5-phosphate. Glu-124 lines the NADPH pocket. Asp-148 contacts Mn(2+). 4 residues coordinate 1-deoxy-D-xylulose 5-phosphate: Ser-149, Glu-150, Ser-177, and His-200. A Mn(2+)-binding site is contributed by Glu-150. Gly-206 lines the NADPH pocket. 1-deoxy-D-xylulose 5-phosphate is bound by residues Ser-213, Asn-218, Lys-219, and Glu-222. Glu-222 lines the Mn(2+) pocket.

The protein belongs to the DXR family. It depends on Mg(2+) as a cofactor. Requires Mn(2+) as cofactor.

The catalysed reaction is 2-C-methyl-D-erythritol 4-phosphate + NADP(+) = 1-deoxy-D-xylulose 5-phosphate + NADPH + H(+). The protein operates within isoprenoid biosynthesis; isopentenyl diphosphate biosynthesis via DXP pathway; isopentenyl diphosphate from 1-deoxy-D-xylulose 5-phosphate: step 1/6. Its function is as follows. Catalyzes the NADPH-dependent rearrangement and reduction of 1-deoxy-D-xylulose-5-phosphate (DXP) to 2-C-methyl-D-erythritol 4-phosphate (MEP). This chain is 1-deoxy-D-xylulose 5-phosphate reductoisomerase, found in Francisella tularensis subsp. tularensis (strain WY96-3418).